We begin with the raw amino-acid sequence, 447 residues long: GTPase Der (447 aa).

2 consecutive EngA-type G domains span residues 3–167 (PVIA…ALPE) and 180–353 (IRLA…KSAN). GTP contacts are provided by residues 9–16 (GRPNVGKS), 56–60 (DTGGF), 119–122 (NKAE), 186–193 (GRPNVGKS), 233–237 (DTAGL), and 298–301 (NKWD). The 85-residue stretch at 354–438 (RKMPTPVLTR…PLRIEMKTSS (85 aa)) folds into the KH-like domain.

It belongs to the TRAFAC class TrmE-Era-EngA-EngB-Septin-like GTPase superfamily. EngA (Der) GTPase family. In terms of assembly, associates with the 50S ribosomal subunit.

Its function is as follows. GTPase that plays an essential role in the late steps of ribosome biogenesis. The polypeptide is GTPase Der (Acidovorax sp. (strain JS42)).